Here is a 555-residue protein sequence, read N- to C-terminus: Dihydroxy-acid dehydratase (555 aa).

Cys-46 is a [2Fe-2S] cluster binding site. Asp-78 serves as a coordination point for Mg(2+). Cys-119 provides a ligand contact to [2Fe-2S] cluster. 2 residues coordinate Mg(2+): Asp-120 and Lys-121. Lys-121 bears the N6-carboxylysine mark. Cys-191 serves as a coordination point for [2Fe-2S] cluster. A Mg(2+)-binding site is contributed by Glu-442. Ser-468 acts as the Proton acceptor in catalysis.

Belongs to the IlvD/Edd family. In terms of assembly, homodimer. The cofactor is [2Fe-2S] cluster. Mg(2+) is required as a cofactor.

The catalysed reaction is (2R)-2,3-dihydroxy-3-methylbutanoate = 3-methyl-2-oxobutanoate + H2O. It carries out the reaction (2R,3R)-2,3-dihydroxy-3-methylpentanoate = (S)-3-methyl-2-oxopentanoate + H2O. It functions in the pathway amino-acid biosynthesis; L-isoleucine biosynthesis; L-isoleucine from 2-oxobutanoate: step 3/4. Its pathway is amino-acid biosynthesis; L-valine biosynthesis; L-valine from pyruvate: step 3/4. Functions in the biosynthesis of branched-chain amino acids. Catalyzes the dehydration of (2R,3R)-2,3-dihydroxy-3-methylpentanoate (2,3-dihydroxy-3-methylvalerate) into 2-oxo-3-methylpentanoate (2-oxo-3-methylvalerate) and of (2R)-2,3-dihydroxy-3-methylbutanoate (2,3-dihydroxyisovalerate) into 2-oxo-3-methylbutanoate (2-oxoisovalerate), the penultimate precursor to L-isoleucine and L-valine, respectively. In Thermus thermophilus (strain ATCC BAA-163 / DSM 7039 / HB27), this protein is Dihydroxy-acid dehydratase.